Reading from the N-terminus, the 103-residue chain is Urease subunit beta (103 aa).

It belongs to the urease beta subunit family. Heterotrimer of UreA (gamma), UreB (beta) and UreC (alpha) subunits. Three heterotrimers associate to form the active enzyme.

It is found in the cytoplasm. The catalysed reaction is urea + 2 H2O + H(+) = hydrogencarbonate + 2 NH4(+). It functions in the pathway nitrogen metabolism; urea degradation; CO(2) and NH(3) from urea (urease route): step 1/1. The chain is Urease subunit beta from Blochmanniella floridana.